The following is a 506-amino-acid chain: Nostrin (506 aa).

The region spanning 1 to 260 (MRDPLTDCSY…AISKVDVEKD (260 aa)) is the F-BAR domain. Serine 114 is modified (phosphoserine). 2 coiled-coil regions span residues 160–230 (SLTQ…LNQY) and 305–334 (KLGR…ASSS). One can recognise an REM-1 domain in the interval 292–372 (PMDKERRKSL…SYKLSSVLAD (81 aa)). The tract at residues 413–435 (KAESKAPAGGQNNPSSSPSGSTV) is disordered. Over residues 419-435 (PAGGQNNPSSSPSGSTV) the composition is skewed to low complexity. The region spanning 438–497 (ASKHLCKALYTFQARQDDELNLEKGDIVTVHEKKEEGWWFGSLKGKRGHFPAAYVEELPP) is the SH3 domain. Serine 479 carries the phosphoserine modification.

As to quaternary structure, homotrimer. Interacts with NOS3, DNM2, WASL and CAV1. Interacts with DAB2. Interacts (via SH3 domain) with DNM2; this interaction allows the recruitment of NOS3 to dynamin-positive structures.

Its subcellular location is the cell membrane. It is found in the cytoplasmic vesicle. The protein localises to the cytoplasm. It localises to the cytoskeleton. The protein resides in the nucleus. Multivalent adapter protein which may decrease NOS3 activity by inducing its translocation away from the plasma membrane. The chain is Nostrin from Mus musculus (Mouse).